A 352-amino-acid chain; its full sequence is Protein TIFY 6B (352 aa).

The disordered stretch occupies residues 1–71 (MERDFLGLGS…KSGNYHLPHS (71 aa)). The segment covering 17-26 (VKEETSESSR) has biased composition (basic and acidic residues). Polar residues predominate over residues 34–54 (MNWSFSNKVSASSSQFLSFRP). A Tify domain is found at 172 to 207 (PIGSPAQLTIFYAGSVCVYDDISPEKAKAIMLLAGN). The Jas motif lies at 302–326 (PLARKASLARFLEKRKERVTSVSPY). The Nuclear localization signal signature appears at 304–311 (ARKASLAR).

Belongs to the TIFY/JAZ family. Homo- and heterodimer. Interacts with COI1, MYC2, MYC3, MYC4, TIFY10A/JAZ1, TIFY10B/JAZ2, TIFY6A/JAZ4, TIFY5A/JAZ8, TIFY7/JAZ9, TIFY9/JAZ10 and TIFY3A/JAZ11. Interacts (via TIFY domain) with AFPH2/NINJA. In terms of processing, ubiquitinated. Targeted for degradation by the SCF(COI1) E3 ubiquitin ligase-proteasome pathway during jasmonate signaling. Srtongly expressed in root tips.

The protein localises to the nucleus. Repressor of jasmonate responses. Jasmonoyl-isoleucine (JA-Ile) specifically promotes COI1-TIFY6B/JAZ3 interaction. Acts as a negative regulator of MYC2 function. Feed-back regulated by MYC2. The protein is Protein TIFY 6B (TIFY6B) of Arabidopsis thaliana (Mouse-ear cress).